A 576-amino-acid chain; its full sequence is MSLSLGAAIYIALKPIFKIYTIMLVGYLVAKFDIVSMENAKGISNMVVNAILPCLTFNKIVSNISWRDIKEIGVIILSAFILFVLGATGALFTTFATTVPKKFFWGLIFAGFFPNISDLPIAYIQSMGNGSIFTAEEADKGVAYSCIFLFIQSFLMMNFGMWRVVGLDFRDTKEPDSENITPSVSPAIDDRKLTEITKLPNITRPTNAYQSEDARSNSDLSCNSITTNEMTPQAFYEGFTGYIKPYKESNGASHKFESDLPHAEIYRVSSTYSSPGALEFSRIDGSSLSYSRISKNSDGRSYRRKRKADMNELISKYSAAEKIRQGELDLSRPLSLTEEVGSRNASIGNVHTGYTDESSIEEENCTNMATDGRGSLSFFIERHNLKWLQYFIINCLRPASLGAILGIICALIPWVKACFVTTYVHVHKAPDGEPVLNFLMDFTEYIGNACVPLGLLLLGGTLARLEIKSLPPGFIKSALLMTCFRLIVIPIIGVLWVNKLYSIDWLDTGIGKFDMILTWSMPSATAQVYFTAFYTPACGDHIQMNCLSVLFVMQYAILFITVAFVVTYTLKVDLKV.

Residues 1–8 (MSLSLGAA) are Cytoplasmic-facing. The chain crosses the membrane as a helical span at residues 9 to 29 (IYIALKPIFKIYTIMLVGYLV). At 30-45 (AKFDIVSMENAKGISN) the chain is on the extracellular side. A helical membrane pass occupies residues 46-66 (MVVNAILPCLTFNKIVSNISW). Residues 67 to 71 (RDIKE) lie on the Cytoplasmic side of the membrane. Residues 72–92 (IGVIILSAFILFVLGATGALF) form a helical membrane-spanning segment. Residues 93–103 (TTFATTVPKKF) are Extracellular-facing. The chain crosses the membrane as a helical span at residues 104-124 (FWGLIFAGFFPNISDLPIAYI). At 125-141 (QSMGNGSIFTAEEADKG) the chain is on the cytoplasmic side. A helical transmembrane segment spans residues 142 to 162 (VAYSCIFLFIQSFLMMNFGMW). At 163-400 (RVVGLDFRDT…FIINCLRPAS (238 aa)) the chain is on the extracellular side. A helical membrane pass occupies residues 401–421 (LGAILGIICALIPWVKACFVT). At 422 to 437 (TYVHVHKAPDGEPVLN) the chain is on the cytoplasmic side. Residues 438-458 (FLMDFTEYIGNACVPLGLLLL) form a helical membrane-spanning segment. Over 459–476 (GGTLARLEIKSLPPGFIK) the chain is Extracellular. The chain crosses the membrane as a helical span at residues 477 to 497 (SALLMTCFRLIVIPIIGVLWV). Residues 498 to 512 (NKLYSIDWLDTGIGK) are Cytoplasmic-facing. Residues 513–533 (FDMILTWSMPSATAQVYFTAF) traverse the membrane as a helical segment. Residues 534-545 (YTPACGDHIQMN) lie on the Extracellular side of the membrane. Residues 546–566 (CLSVLFVMQYAILFITVAFVV) form a helical membrane-spanning segment. Residues 567-576 (TYTLKVDLKV) lie on the Cytoplasmic side of the membrane.

The protein belongs to the auxin efflux carrier (TC 2.A.69) family.

It is found in the membrane. This is an uncharacterized protein from Saccharomyces cerevisiae (strain ATCC 204508 / S288c) (Baker's yeast).